The sequence spans 147 residues: MEKKFYLVREDILPEAMKKVVLAKQLLERKKAASVAEAAQLANISRGVFYKYRDAIFPFQAVTKENIVTLFFHLEDRSGTLSQLLSVVAAAGCNVLTIHQTIPLQGRANVTLSVSTNDMHEDIDELLAKLRGLEFVEKVEIVGSGVY.

The 76-residue stretch at 69–144 (TLFFHLEDRS…FVEKVEIVGS (76 aa)) folds into the ACT domain.

It belongs to the UPF0735 family.

This Geobacillus thermodenitrificans (strain NG80-2) protein is UPF0735 ACT domain-containing protein GTNG_2535.